Reading from the N-terminus, the 159-residue chain is D-aminoacyl-tRNA deacylase (159 aa).

The Gly-cisPro motif, important for rejection of L-amino acids signature appears at 142-143 (GP).

Belongs to the DTD family. In terms of assembly, homodimer.

The protein resides in the cytoplasm. The catalysed reaction is glycyl-tRNA(Ala) + H2O = tRNA(Ala) + glycine + H(+). It catalyses the reaction a D-aminoacyl-tRNA + H2O = a tRNA + a D-alpha-amino acid + H(+). An aminoacyl-tRNA editing enzyme that deacylates mischarged D-aminoacyl-tRNAs. Also deacylates mischarged glycyl-tRNA(Ala), protecting cells against glycine mischarging by AlaRS. Acts via tRNA-based rather than protein-based catalysis; rejects L-amino acids rather than detecting D-amino acids in the active site. By recycling D-aminoacyl-tRNA to D-amino acids and free tRNA molecules, this enzyme counteracts the toxicity associated with the formation of D-aminoacyl-tRNA entities in vivo and helps enforce protein L-homochirality. This is D-aminoacyl-tRNA deacylase from Albidiferax ferrireducens (strain ATCC BAA-621 / DSM 15236 / T118) (Rhodoferax ferrireducens).